Consider the following 412-residue polypeptide: tRNA N6-adenosine threonylcarbamoyltransferase, mitochondrial (412 aa).

Residues 1 to 78 (MLCLVYNSIL…IICLNTHRTI (78 aa)) constitute a mitochondrion transit peptide. Residues histidine 157 and histidine 161 each coordinate a divalent metal cation. Substrate-binding positions include 179–183 (LVSGG), aspartate 212, alanine 228, glutamate 232, 328–329 (RN), and serine 363. Aspartate 364 is an a divalent metal cation binding site.

This sequence belongs to the KAE1 / TsaD family. As to quaternary structure, homodimer. A divalent metal cation serves as cofactor.

It localises to the mitochondrion. The enzyme catalyses L-threonylcarbamoyladenylate + adenosine(37) in tRNA = N(6)-L-threonylcarbamoyladenosine(37) in tRNA + AMP + H(+). Its function is as follows. Required for the formation of a threonylcarbamoyl group on adenosine at position 37 (t(6)A37) in mitochondrial tRNAs that read codons beginning with adenine. Probably involved in the transfer of the threonylcarbamoyl moiety of threonylcarbamoyl-AMP (TC-AMP) to the N6 group of A37. Involved in mitochondrial genome maintenance. The chain is tRNA N6-adenosine threonylcarbamoyltransferase, mitochondrial (pgp1) from Schizosaccharomyces pombe (strain 972 / ATCC 24843) (Fission yeast).